A 221-amino-acid chain; its full sequence is Guanylate kinase (221 aa).

Residues 18–196 (GFLFILSSPS…SASLIKSIYL (179 aa)) enclose the Guanylate kinase-like domain. 25–32 (SPSGAGKS) lines the ATP pocket.

The protein belongs to the guanylate kinase family.

It localises to the cytoplasm. It carries out the reaction GMP + ATP = GDP + ADP. Its function is as follows. Essential for recycling GMP and indirectly, cGMP. This Bartonella quintana (strain Toulouse) (Rochalimaea quintana) protein is Guanylate kinase.